The following is a 295-amino-acid chain: ATP synthase gamma chain (295 aa).

Belongs to the ATPase gamma chain family. As to quaternary structure, F-type ATPases have 2 components, CF(1) - the catalytic core - and CF(0) - the membrane proton channel. CF(1) has five subunits: alpha(3), beta(3), gamma(1), delta(1), epsilon(1). CF(0) has three main subunits: a, b and c.

It localises to the cell inner membrane. Functionally, produces ATP from ADP in the presence of a proton gradient across the membrane. The gamma chain is believed to be important in regulating ATPase activity and the flow of protons through the CF(0) complex. In Chlorobium phaeobacteroides (strain BS1), this protein is ATP synthase gamma chain.